A 587-amino-acid chain; its full sequence is Ankyrin repeat and SOCS box protein 14 (587 aa).

ANK repeat units lie at residues 82–112 (IGWIPLHKAAVQLNRKILEITLSASDPSLWE), 117–146 (NGETPLFLAVSSCLLENATFLLLNGCNPNA), 150–179 (EGNSPLLAAVLRDCYDMAALLINYGADVNL), 183–212 (NERTALHEAAKLGREDMVKLMLVSGAHPDP), 216–245 (YGFTPLALAAQSGHTEIMEMLLRKGKIFCL), 248–277 (DSSSILLEAASGGNPDAVALLLEYGADANI), 281–310 (SGHLPIHVAADRGHLLALKILIPVTDLAAI), 313–342 (SGISPVHCAAAGAHPQCLELLIQAGFDVNF), 355–384 (HRKSALYFAVSNSDLSSVKLLLSAGALPNQ), 385–414 (DPVNCLQIALRMGNYELISLLLRHGANVNY), and 416–449 (CRVNPLHFPSALQYTLKDEVMLRMLLNYGYDTER). The SOCS box domain occupies 521-576 (WSEIHFILTNPRSLKHLCRLKIRKCMGRLHLRCPVFMSFLPLPNRLKAYVLYKEYD).

The protein belongs to the ankyrin SOCS box (ASB) family. In terms of assembly, interacts with MAPRE2; this interaction promotes MAPRE2 degradation.

The protein operates within protein modification; protein ubiquitination. May be a substrate-recognition component of a SCF-like ECS (Elongin-Cullin-SOCS-box protein) E3 ubiquitin-protein ligase complex which mediates the ubiquitination and subsequent proteasomal degradation of target proteins. Plays a role in the inhibition of cardiomyocyte nuclear proliferation by mediating the ubiquitination and degradation of MAPRE2. The polypeptide is Ankyrin repeat and SOCS box protein 14 (ASB14) (Homo sapiens (Human)).